A 240-amino-acid chain; its full sequence is tRNA (guanine-N(7)-)-methyltransferase (240 aa).

S-adenosyl-L-methionine contacts are provided by E70, E95, D122, and D145. Residue D145 is part of the active site. Substrate is bound by residues K149, D181, and 218–221 (TKFE).

The protein belongs to the class I-like SAM-binding methyltransferase superfamily. TrmB family.

The enzyme catalyses guanosine(46) in tRNA + S-adenosyl-L-methionine = N(7)-methylguanosine(46) in tRNA + S-adenosyl-L-homocysteine. The protein operates within tRNA modification; N(7)-methylguanine-tRNA biosynthesis. Its function is as follows. Catalyzes the formation of N(7)-methylguanine at position 46 (m7G46) in tRNA. The protein is tRNA (guanine-N(7)-)-methyltransferase of Pseudomonas entomophila (strain L48).